The primary structure comprises 316 residues: HPr kinase/phosphorylase (316 aa).

Active-site residues include His146 and Lys167. ATP is bound at residue 161 to 168; it reads GESGLGKS. Ser168 contacts Mg(2+). The active-site Proton acceptor; for phosphorylation activity. Proton donor; for dephosphorylation activity is the Asp185. The important for the catalytic mechanism of both phosphorylation and dephosphorylation stretch occupies residues 209 to 218; it reads LEVRGIGLLD. Residue Glu210 coordinates Mg(2+). Arg252 is a catalytic residue. The tract at residues 273 to 278 is important for the catalytic mechanism of dephosphorylation; the sequence is QVEAGR.

This sequence belongs to the HPrK/P family. Homohexamer. Mg(2+) is required as a cofactor.

The catalysed reaction is [HPr protein]-L-serine + ATP = [HPr protein]-O-phospho-L-serine + ADP + H(+). It carries out the reaction [HPr protein]-O-phospho-L-serine + phosphate + H(+) = [HPr protein]-L-serine + diphosphate. Its function is as follows. Catalyzes the ATP- as well as the pyrophosphate-dependent phosphorylation of a specific serine residue in HPr, a phosphocarrier protein of the phosphoenolpyruvate-dependent sugar phosphotransferase system (PTS). HprK/P also catalyzes the pyrophosphate-producing, inorganic phosphate-dependent dephosphorylation (phosphorolysis) of seryl-phosphorylated HPr (P-Ser-HPr). This is HPr kinase/phosphorylase from Polaromonas naphthalenivorans (strain CJ2).